A 427-amino-acid chain; its full sequence is C4-dicarboxylate transport protein (427 aa).

The next 9 membrane-spanning stretches (helical) occupy residues 5–25 (IFSSLYFQVLLAITLGVFLGH), 44–64 (LIKMIIAPVIFCTVVTGIAGM), 76–96 (IALLYFEVVSTIALVIGLCVV), 142–162 (IGAFASGNILQVLLFAVLFGF), 184–206 (VIFGIINMIMRLAPVGAFGAMAF), 222–242 (LIACFYVTCLLFIFMVLGSIA), 307–327 (IYLTMAAIFIAQATNTPLDLF), 330–350 (ITLLVVLLISSKGAAGVTGSG), and 352–372 (IVLAATISAVGHLPLAGLALI).

It belongs to the dicarboxylate/amino acid:cation symporter (DAACS) (TC 2.A.23) family.

Its subcellular location is the cell inner membrane. Functionally, responsible for the transport of dicarboxylates such as succinate, fumarate, and malate from the periplasm across the membrane. The sequence is that of C4-dicarboxylate transport protein from Aeromonas salmonicida (strain A449).